We begin with the raw amino-acid sequence, 570 residues long: MNSGHKARLRGGRACGPVSDGSARGNRLLFYTRSLSRVPEWLLRVLLLLLRWLFQPIRRAMAARAKECGPDGSEETGERIRNYHKQAFEFISVALQIDEDEKGDKQKAVQWYRKGIAELEKGIQIQVTGAGEKADRARKLQDKMITNLSMAEDRLKLLGNLLSQSPAESSSDDSFYSFSNGNLRPAPASGAVSKKKDTLTITNQTSLRPKNPPKSTPNASGLNCTPSAAQSSRTGPQNNQKGPTVKGKNNVKASTTATASPQRKRDMKNFKNVDSKLASLILNEIVDSGSVVRFDDIAGQDLAKQALQEIVILPALRPELFTGLRAPARGLLLFGPPGNGKTMLAKAVAMESNATFFNISAATLTSKYVGEGEKLVRALFAVARELQPSIIFIDEIDSLLCERREGEHDASRRLKTEFLIEFDGVQSGGDERVLVMGATNRPQELDEAVLRRFAKRIYVALPTEETRLKLLKNLLSKHRNPLSQKELSQLARLTDGYSGSDLTSLAKDAALGPIRELKPEQVRNMSAHEMRDIRISDFLESLKRIKRSVSPQTLDQYVRWNREYGDTTGV.

Residues 1–35 (MNSGHKARLRGGRACGPVSDGSARGNRLLFYTRSL) lie on the Cytoplasmic side of the membrane. Positions 36–52 (SRVPEWLLRVLLLLLRW) form an intramembrane region, helical. Residues 53-570 (LFQPIRRAMA…NREYGDTTGV (518 aa)) lie on the Cytoplasmic side of the membrane. One can recognise an MIT domain in the interval 83-158 (YHKQAFEFIS…SMAEDRLKLL (76 aa)). The segment at 186–269 (APASGAVSKK…SPQRKRDMKN (84 aa)) is disordered. Polar residues-rich tracts occupy residues 199-208 (LTITNQTSLR), 216-242 (TPNASGLNCTPSAAQSSRTGPQNNQKG), and 251-261 (VKASTTATASP). 335–342 (GPPGNGKT) contributes to the ATP binding site.

This sequence belongs to the AAA ATPase family. Spastin subfamily. Homohexamer. The homohexamer is stabilized by ATP-binding. The homohexamer may adopt a ring conformation through which microtubules pass prior to being severed. Interacts with microtubules.

The protein resides in the membrane. Its subcellular location is the cytoplasm. The protein localises to the cytoskeleton. It localises to the microtubule organizing center. It is found in the centrosome. The protein resides in the perinuclear region. Its subcellular location is the nucleus. It carries out the reaction n ATP + n H2O + a microtubule = n ADP + n phosphate + (n+1) alpha/beta tubulin heterodimers.. Functionally, ATP-dependent microtubule severing protein that specifically recognizes and cuts microtubules that are polyglutamylated. Preferentially recognizes and acts on microtubules decorated with short polyglutamate tails: severing activity increases as the number of glutamates per tubulin rises from one to eight, but decreases beyond this glutamylation threshold. Microtubule severing promotes reorganization of cellular microtubule arrays and the release of microtubules from the centrosome following nucleation. Required for membrane traffic from the endoplasmic reticulum (ER) to the Golgi and for completion of the abscission stage of cytokinesis. Also plays a role in axon growth and the formation of axonal branches. The sequence is that of Spastin from Danio rerio (Zebrafish).